The sequence spans 235 residues: Sugar fermentation stimulation protein homolog (235 aa).

This sequence belongs to the SfsA family.

The polypeptide is Sugar fermentation stimulation protein homolog (Pseudomonas aeruginosa (strain LESB58)).